A 959-amino-acid polypeptide reads, in one-letter code: Glycine dehydrogenase (decarboxylating) (959 aa).

N6-(pyridoxal phosphate)lysine is present on Lys708.

This sequence belongs to the GcvP family. In terms of assembly, the glycine cleavage system is composed of four proteins: P, T, L and H. Pyridoxal 5'-phosphate serves as cofactor.

The enzyme catalyses N(6)-[(R)-lipoyl]-L-lysyl-[glycine-cleavage complex H protein] + glycine + H(+) = N(6)-[(R)-S(8)-aminomethyldihydrolipoyl]-L-lysyl-[glycine-cleavage complex H protein] + CO2. The glycine cleavage system catalyzes the degradation of glycine. The P protein binds the alpha-amino group of glycine through its pyridoxal phosphate cofactor; CO(2) is released and the remaining methylamine moiety is then transferred to the lipoamide cofactor of the H protein. The sequence is that of Glycine dehydrogenase (decarboxylating) from Serratia proteamaculans (strain 568).